An 87-amino-acid polypeptide reads, in one-letter code: Putative regulatory protein BH2513 (87 aa).

The protein belongs to the RemA family.

The chain is Putative regulatory protein BH2513 from Halalkalibacterium halodurans (strain ATCC BAA-125 / DSM 18197 / FERM 7344 / JCM 9153 / C-125) (Bacillus halodurans).